A 555-amino-acid chain; its full sequence is Wee1-like protein kinase 2 (555 aa).

A disordered region spans residues 1-112 (MADTETDQGL…NFSTPKNSLG (112 aa)). A Phosphoserine; by CaMK2 and PKA modification is found at Ser-15. Polar residues predominate over residues 26–41 (EGQMTAQDIGGAQSQK). Residues 57–72 (TRDELHTSLSRDKESP) show a composition bias toward basic and acidic residues. Ser-71 carries the phosphoserine modification. Residues 102–112 (TNFSTPKNSLG) are compositionally biased toward polar residues. Positions 167–169 (KRK) match the Nuclear localization signal motif. In terms of domain architecture, Protein kinase spans 208–485 (FFEIEKIGVG…ARSRILWPFL (278 aa)). ATP is bound by residues 214–222 (IGVGEFGTV) and Lys-237. Residues 310-324 (KLKDILLQISLGLKY) carry the Nuclear export signal motif. Asp-334 (proton acceptor) is an active-site residue. Mg(2+) contacts are provided by Asn-339 and Asp-375. Residues 488-514 (TDELQKQLNLEKSKTATLKRELKKARH) adopt a coiled-coil conformation.

This sequence belongs to the protein kinase superfamily. Ser/Thr protein kinase family. WEE1 subfamily. Phosphorylated by PKA at Ser-15 in vitro, leading to activate kinase activity. Phosphorylation at Ser-15 by CaMK2, leading to increase its activity and promote metaphase II exit during egg activation. In terms of tissue distribution, ovary-specific.

Its subcellular location is the cytoplasm. It localises to the nucleus. The catalysed reaction is L-tyrosyl-[protein] + ATP = O-phospho-L-tyrosyl-[protein] + ADP + H(+). In terms of biological role, oocyte-specific protein tyrosine kinase that phosphorylates and inhibits CDK1 and acts as a key regulator of meiosis during both prophase I and metaphase II. Required to maintain meiotic arrest in oocytes during the germinal vesicle (GV) stage, a long period of quiescence at dictyate prophase I, by phosphorylating CDK1 at 'Tyr-15', leading to inhibit CDK1 activity and prevent meiotic reentry. Also required for metaphase II exit during egg activation by phosphorylating CDK1 at 'Tyr-15', to ensure exit from meiosis in oocytes and promote pronuclear formation. In Mus musculus (Mouse), this protein is Wee1-like protein kinase 2 (Wee2).